The primary structure comprises 502 residues: NAD(P)H-quinone oxidoreductase chain 4, chloroplastic (502 aa).

14 helical membrane-spanning segments follow: residues 4-24 (FPWLTILVVLPIFAGSLIFFL), 37-57 (ISICLLEFLLMTYAFCYHFQL), 87-107 (LGSILLTGFITTLATLAAWPV), 113-130 (LFYFLMLAMYSGQIGLFS), 134-154 (LLLFFIMWELELIPVYLLLSM), 167-187 (FILYTAGGSIFFLIGVLGMGL), 213-233 (ILLYFGFLIAYAVKLPIIPLH), 244-264 (HYSTCMLLAGILLKMGAYGLI), 274-294 (AHYLFSPWLVIIGAIQIIYAA), 315-335 (MGFIIIGIGSITNIGLNGAIL), 336-356 (QILSHGFIGATLFFLAGTASD), 388-408 (LALPGMSGFVAELVVFFGLIT), 419-439 (LITFVMAIGMILTPIYLLSML), and 464-484 (LFILICIFLPVIGIGIYPDFV).

This sequence belongs to the complex I subunit 4 family.

It is found in the plastid. It localises to the chloroplast thylakoid membrane. It catalyses the reaction a plastoquinone + NADH + (n+1) H(+)(in) = a plastoquinol + NAD(+) + n H(+)(out). The catalysed reaction is a plastoquinone + NADPH + (n+1) H(+)(in) = a plastoquinol + NADP(+) + n H(+)(out). The chain is NAD(P)H-quinone oxidoreductase chain 4, chloroplastic from Lolium perenne (Perennial ryegrass).